The chain runs to 284 residues: Bifunctional protein FolD (284 aa).

Residues 164 to 166 (GTS) and isoleucine 230 contribute to the NADP(+) site.

Belongs to the tetrahydrofolate dehydrogenase/cyclohydrolase family. In terms of assembly, homodimer.

It catalyses the reaction (6R)-5,10-methylene-5,6,7,8-tetrahydrofolate + NADP(+) = (6R)-5,10-methenyltetrahydrofolate + NADPH. It carries out the reaction (6R)-5,10-methenyltetrahydrofolate + H2O = (6R)-10-formyltetrahydrofolate + H(+). The protein operates within one-carbon metabolism; tetrahydrofolate interconversion. In terms of biological role, catalyzes the oxidation of 5,10-methylenetetrahydrofolate to 5,10-methenyltetrahydrofolate and then the hydrolysis of 5,10-methenyltetrahydrofolate to 10-formyltetrahydrofolate. The polypeptide is Bifunctional protein FolD (Mycoplasma capricolum subsp. capricolum (strain California kid / ATCC 27343 / NCTC 10154)).